The sequence spans 400 residues: S-adenosylmethionine decarboxylase proenzyme (400 aa).

Residues Glu18 and Glu21 contribute to the active site. Ser78 serves as the catalytic Schiff-base intermediate with substrate; via pyruvic acid. Pyruvic acid (Ser); by autocatalysis is present on Ser78. Cys92 functions as the Proton donor; for catalytic activity in the catalytic mechanism. Catalysis depends on proton acceptor; for processing activity residues Ser243 and His256.

This sequence belongs to the eukaryotic AdoMetDC family. Requires pyruvate as cofactor. Is synthesized initially as an inactive proenzyme. Formation of the active enzyme involves a self-maturation process in which the active site pyruvoyl group is generated from an internal serine residue via an autocatalytic post-translational modification. Two non-identical subunits are generated from the proenzyme in this reaction, and the pyruvate is formed at the N-terminus of the alpha chain, which is derived from the carboxyl end of the proenzyme. The post-translation cleavage follows an unusual pathway, termed non-hydrolytic serinolysis, in which the side chain hydroxyl group of the serine supplies its oxygen atom to form the C-terminus of the beta chain, while the remainder of the serine residue undergoes an oxidative deamination to produce ammonia and the pyruvoyl group blocking the N-terminus of the alpha chain.

It carries out the reaction S-adenosyl-L-methionine + H(+) = S-adenosyl 3-(methylsulfanyl)propylamine + CO2. It functions in the pathway amine and polyamine biosynthesis; S-adenosylmethioninamine biosynthesis; S-adenosylmethioninamine from S-adenosyl-L-methionine: step 1/1. The sequence is that of S-adenosylmethionine decarboxylase proenzyme (SAMDC) from Zea mays (Maize).